Reading from the N-terminus, the 231-residue chain is Large ribosomal subunit protein uL1 (231 aa).

It belongs to the universal ribosomal protein uL1 family. As to quaternary structure, part of the 50S ribosomal subunit.

In terms of biological role, binds directly to 23S rRNA. The L1 stalk is quite mobile in the ribosome, and is involved in E site tRNA release. Protein L1 is also a translational repressor protein, it controls the translation of the L11 operon by binding to its mRNA. This is Large ribosomal subunit protein uL1 from Nitrosomonas eutropha (strain DSM 101675 / C91 / Nm57).